We begin with the raw amino-acid sequence, 159 residues long: UPF0262 protein CCNA_02430 (159 aa).

Belongs to the UPF0262 family.

The chain is UPF0262 protein CCNA_02430 from Caulobacter vibrioides (strain NA1000 / CB15N) (Caulobacter crescentus).